We begin with the raw amino-acid sequence, 1058 residues long: Structural maintenance of chromosomes protein 6A (1058 aa).

Positions 23 to 1049 (ILRIRLENFM…SMVKSHEKIK (1027 aa)) constitute a Zinc-hook domain. Residue 50–57 (GQNGSGKS) coordinates ATP. The stretch at 136-449 (KISSRKEELR…NDLKKHQTNK (314 aa)) forms a coiled coil. A flexible hinge region spans residues 450–633 (VTAFGGDKVI…PPRPRRPTRL (184 aa)). Residues 634-927 (CASFDDQIKD…RNKDLLKREL (294 aa)) are a coiled coil.

This sequence belongs to the SMC family. SMC6 subfamily. As to quaternary structure, forms a heterodimer with SMC5. The SMC5-SMC6 complex is composed of the SMC5 and SMC6 heterodimer attached via their hinge domain and from the non-SMC subunit NSE4A or NSE4B. In terms of tissue distribution, expressed in seedlings, rosette leaves and floral buds.

The protein localises to the nucleus. The protein resides in the chromosome. Functionally, core component of the SMC5-SMC6 complex that promotes sister chromatid alignment after DNA damage and facilitates double-stranded DNA breaks (DSBs) repair via homologous recombination between sister chromatids. In Arabidopsis thaliana (Mouse-ear cress), this protein is Structural maintenance of chromosomes protein 6A (SMC6A).